The sequence spans 499 residues: Glycerol kinase (499 aa).

T13 provides a ligand contact to ADP. ATP contacts are provided by T13, T14, and S15. Position 13 (T13) interacts with sn-glycerol 3-phosphate. Residue R17 coordinates ADP. R83, E84, Y135, and D244 together coordinate sn-glycerol 3-phosphate. Glycerol-binding residues include R83, E84, Y135, D244, and Q245. ADP-binding residues include T266 and G309. Residues T266, G309, Q313, and G410 each coordinate ATP. 2 residues coordinate ADP: G410 and N414.

It belongs to the FGGY kinase family.

It carries out the reaction glycerol + ATP = sn-glycerol 3-phosphate + ADP + H(+). It functions in the pathway polyol metabolism; glycerol degradation via glycerol kinase pathway; sn-glycerol 3-phosphate from glycerol: step 1/1. With respect to regulation, inhibited by fructose 1,6-bisphosphate (FBP). Its function is as follows. Key enzyme in the regulation of glycerol uptake and metabolism. Catalyzes the phosphorylation of glycerol to yield sn-glycerol 3-phosphate. The polypeptide is Glycerol kinase (Paraburkholderia phytofirmans (strain DSM 17436 / LMG 22146 / PsJN) (Burkholderia phytofirmans)).